The chain runs to 150 residues: Large ribosomal subunit protein bL9 (150 aa).

The protein belongs to the bacterial ribosomal protein bL9 family.

Functionally, binds to the 23S rRNA. The polypeptide is Large ribosomal subunit protein bL9 (Corynebacterium jeikeium (strain K411)).